Consider the following 163-residue polypeptide: Neurotrophin-3 (163 aa).

An N-terminal signal peptide occupies residues 1–3 (IQS). A propeptide spanning residues 4–119 (TSMDQGILTE…VLNRTSRRKR (116 aa)) is cleaved from the precursor. Residue asparagine 112 is glycosylated (N-linked (GlcNAc...) asparagine). The disordered stretch occupies residues 114-133 (TSRRKREGKSHRGEYSVCDS). Over residues 123 to 133 (SHRGEYSVCDS) the composition is skewed to basic and acidic residues.

Belongs to the NGF-beta family.

It is found in the secreted. Functionally, seems to promote the survival of visceral and proprioceptive sensory neurons. The polypeptide is Neurotrophin-3 (NTF3) (Lichanura trivirgata (Rosy boa)).